The primary structure comprises 270 residues: Pyrroline-5-carboxylate reductase (270 aa).

It belongs to the pyrroline-5-carboxylate reductase family.

It is found in the cytoplasm. It carries out the reaction L-proline + NADP(+) = (S)-1-pyrroline-5-carboxylate + NADPH + 2 H(+). The enzyme catalyses L-proline + NAD(+) = (S)-1-pyrroline-5-carboxylate + NADH + 2 H(+). The protein operates within amino-acid biosynthesis; L-proline biosynthesis; L-proline from L-glutamate 5-semialdehyde: step 1/1. Its function is as follows. Catalyzes the reduction of 1-pyrroline-5-carboxylate (PCA) to L-proline. The polypeptide is Pyrroline-5-carboxylate reductase (Corynebacterium melassecola).